Reading from the N-terminus, the 193-residue chain is dCTP deaminase (193 aa).

Residues 110–115 (RSSLAR), Asp-128, 136–138 (VLE), Tyr-171, Lys-178, and Gln-182 each bind dCTP. Glu-138 (proton donor/acceptor) is an active-site residue.

It belongs to the dCTP deaminase family. In terms of assembly, homotrimer.

The catalysed reaction is dCTP + H2O + H(+) = dUTP + NH4(+). It functions in the pathway pyrimidine metabolism; dUMP biosynthesis; dUMP from dCTP (dUTP route): step 1/2. In terms of biological role, catalyzes the deamination of dCTP to dUTP. This chain is dCTP deaminase, found in Aeromonas salmonicida (strain A449).